The following is a 706-amino-acid chain: Choline transporter-like protein 2 (706 aa).

The Cytoplasmic segment spans residues 1–33 (MGGERQHYYGKHGTPQKYDPTFKGPIYHRGCTD). Phosphothreonine is present on Thr14. The helical transmembrane segment at 34–54 (VICCVFLLLAIVGYVAVGIIA) threads the bilayer. Topologically, residues 55–232 (WTHGDPRKVI…RIFEDYTVSW (178 aa)) are extracellular. Residues Asn187 and Asn200 are each glycosylated (N-linked (GlcNAc...) asparagine). The chain crosses the membrane as a helical span at residues 233-253 (YWIIIGLVIAMVLSLLFIILL). Residues 254–256 (RFL) are Cytoplasmic-facing. A helical membrane pass occupies residues 257-277 (AGIMVWVMIVMVILVLGYGIF). Residues 278 to 315 (HCYMEYSRLRGEAGSDISLVDLGFQTDLRVYLHLRQTW) are Extracellular-facing. The chain crosses the membrane as a helical span at residues 316 to 336 (MAFMIILSILEVIIILLLIFL). Residues 337 to 364 (RKRILIAIALIKEASRAVGYVMCSMLYP) are Cytoplasmic-facing. The helical transmembrane segment at 365–385 (LVTFLLLCLCIAYWASTAIFL) threads the bilayer. Residues 386–440 (STSNEAVYKIFSDTDCQAVGKTCNPENFSSSSEFHLCPGAHCQFAFYGGESTYHR) lie on the Extracellular side of the membrane. Residues 441-461 (ALLGLQIFNAFMFFWLANFVL) traverse the membrane as a helical segment. Residues 462–504 (ALGQVTLAGAFASYYWALKKPDDLPAFPLFSAFGRALRYHTGS) are Cytoplasmic-facing. The helical transmembrane segment at 505-525 (LAFGSLLLAIVQIIRVMLEYL) threads the bilayer. Over 526–563 (DQRLKAAENKFAKFLMTCLKCCFWCLEKFIKFLNRNAY) the chain is Extracellular. The helical transmembrane segment at 564–584 (IMIAIYGTNFCTSARNAFFLL) threads the bilayer. Residues 585–599 (MRNIIRVAVLDKVTD) are Cytoplasmic-facing. A helical transmembrane segment spans residues 600–620 (FLFLLGKLLIVGSVGILAFFF). The Extracellular portion of the chain corresponds to 621–638 (FTHRIRIVQDTAPPLNYY). The helical transmembrane segment at 639 to 659 (WVPILTVIVGSYLIAHGFFSV) threads the bilayer. The Cytoplasmic portion of the chain corresponds to 660-706 (YGMCVDTLFLCFLEDLERNDGSMERPYFMSPTLKRLLNKTNRKPAES).

This sequence belongs to the CTL (choline transporter-like) family. As to quaternary structure, interacts with COCH. Post-translationally, N-glycosylated.

It localises to the cell membrane. It is found in the mitochondrion outer membrane. The catalysed reaction is choline(out) + n H(+)(in) = choline(in) + n H(+)(out). It carries out the reaction ethanolamine(out) + n H(+)(in) = ethanolamine(in) + n H(+)(out). Functionally, choline/H+ antiporter, mainly in mitochodria. Also acts as a low-affinity ethanolamine/H+ antiporter, regulating the supply of extracellular ethanolamine (Etn) for the CDP-Etn pathway, redistribute intracellular Etn and balance the CDP-Cho and CDP-Etn arms of the Kennedy pathway. The sequence is that of Choline transporter-like protein 2 (SLC44A2) from Sus scrofa (Pig).